The chain runs to 291 residues: Bifunctional protein FolD (291 aa).

NADP(+) contacts are provided by residues 166-168 and Ile-232; that span reads GAS.

This sequence belongs to the tetrahydrofolate dehydrogenase/cyclohydrolase family. As to quaternary structure, homodimer.

It catalyses the reaction (6R)-5,10-methylene-5,6,7,8-tetrahydrofolate + NADP(+) = (6R)-5,10-methenyltetrahydrofolate + NADPH. It carries out the reaction (6R)-5,10-methenyltetrahydrofolate + H2O = (6R)-10-formyltetrahydrofolate + H(+). The protein operates within one-carbon metabolism; tetrahydrofolate interconversion. Catalyzes the oxidation of 5,10-methylenetetrahydrofolate to 5,10-methenyltetrahydrofolate and then the hydrolysis of 5,10-methenyltetrahydrofolate to 10-formyltetrahydrofolate. This chain is Bifunctional protein FolD, found in Photorhabdus laumondii subsp. laumondii (strain DSM 15139 / CIP 105565 / TT01) (Photorhabdus luminescens subsp. laumondii).